Here is an 892-residue protein sequence, read N- to C-terminus: Alanine--tRNA ligase (892 aa).

Zn(2+) contacts are provided by His-577, His-581, Cys-680, and His-684.

This sequence belongs to the class-II aminoacyl-tRNA synthetase family. Requires Zn(2+) as cofactor.

The protein localises to the cytoplasm. It catalyses the reaction tRNA(Ala) + L-alanine + ATP = L-alanyl-tRNA(Ala) + AMP + diphosphate. Its function is as follows. Catalyzes the attachment of alanine to tRNA(Ala) in a two-step reaction: alanine is first activated by ATP to form Ala-AMP and then transferred to the acceptor end of tRNA(Ala). Also edits incorrectly charged Ser-tRNA(Ala) and Gly-tRNA(Ala) via its editing domain. This Arthrobacter sp. (strain FB24) protein is Alanine--tRNA ligase.